Consider the following 262-residue polypeptide: Small ribosomal subunit protein uS2 (262 aa).

The tract at residues 224 to 262 (GKQGQDDAQQETADDNAANETVSEDSLKNLKNSVEGKED) is disordered.

It belongs to the universal ribosomal protein uS2 family.

This is Small ribosomal subunit protein uS2 from Limosilactobacillus reuteri (strain DSM 20016) (Lactobacillus reuteri).